The following is a 651-amino-acid chain: Acetyl-coenzyme A synthetase (651 aa).

Residues 190–193 and Thr311 each bind CoA; that span reads RRGK. Residues 387–389, 411–416, Asp508, and Arg523 each bind ATP; these read GEP and DTWWQT. Ser531 serves as a coordination point for CoA. Arg534 contacts ATP. Mg(2+) is bound by residues Val545, His547, and Val550. An N6-acetyllysine modification is found at Lys617.

Belongs to the ATP-dependent AMP-binding enzyme family. It depends on Mg(2+) as a cofactor. Post-translationally, acetylated. Deacetylation by the SIR2-homolog deacetylase activates the enzyme.

It catalyses the reaction acetate + ATP + CoA = acetyl-CoA + AMP + diphosphate. In terms of biological role, catalyzes the conversion of acetate into acetyl-CoA (AcCoA), an essential intermediate at the junction of anabolic and catabolic pathways. AcsA undergoes a two-step reaction. In the first half reaction, AcsA combines acetate with ATP to form acetyl-adenylate (AcAMP) intermediate. In the second half reaction, it can then transfer the acetyl group from AcAMP to the sulfhydryl group of CoA, forming the product AcCoA. This Mycobacterium bovis (strain ATCC BAA-935 / AF2122/97) protein is Acetyl-coenzyme A synthetase.